Reading from the N-terminus, the 205-residue chain is Small ribosomal subunit protein uS4 (205 aa).

The tract at residues 19–45 is disordered; sequence IWGRSKSPVNRREYGPGQHGQRRKGKL. The region spanning 94–157 is the S4 RNA-binding domain; sequence RRLDAVVYRA…KQMALVLEAV (64 aa).

The protein belongs to the universal ribosomal protein uS4 family. As to quaternary structure, part of the 30S ribosomal subunit. Contacts protein S5. The interaction surface between S4 and S5 is involved in control of translational fidelity.

Its function is as follows. One of the primary rRNA binding proteins, it binds directly to 16S rRNA where it nucleates assembly of the body of the 30S subunit. With S5 and S12 plays an important role in translational accuracy. This Azorhizobium caulinodans (strain ATCC 43989 / DSM 5975 / JCM 20966 / LMG 6465 / NBRC 14845 / NCIMB 13405 / ORS 571) protein is Small ribosomal subunit protein uS4.